Reading from the N-terminus, the 156-residue chain is Small ribosomal subunit protein uS7cz/uS7cy (156 aa).

The protein belongs to the universal ribosomal protein uS7 family. Part of the 30S ribosomal subunit.

It is found in the plastid. The protein localises to the chloroplast. Functionally, one of the primary rRNA binding proteins, it binds directly to 16S rRNA where it nucleates assembly of the head domain of the 30S subunit. This Saccharum hybrid (Sugarcane) protein is Small ribosomal subunit protein uS7cz/uS7cy (rps7-A).